We begin with the raw amino-acid sequence, 248 residues long: Small ribosomal subunit protein uS5 (248 aa).

The interval 1-87 is disordered; the sequence is MEDKKLSSAK…NPRFQRNNKD (87 aa). The span at 8–23 shows a compositional bias: low complexity; that stretch reads SAKPATSSKPAPKAPS. The span at 57–87 shows a compositional bias: basic and acidic residues; that stretch reads VAFEKRNFTSGDKTKKPTDSKNPRFQRNNKD. The S5 DRBM domain maps to 94–157; sequence YEEKIVDIAR…KDAHNNLVEV (64 aa).

It belongs to the universal ribosomal protein uS5 family. As to quaternary structure, part of the 30S ribosomal subunit. Contacts proteins S4 and S8.

Its function is as follows. With S4 and S12 plays an important role in translational accuracy. Located at the back of the 30S subunit body where it stabilizes the conformation of the head with respect to the body. This is Small ribosomal subunit protein uS5 from Mycoplasmopsis synoviae (strain 53) (Mycoplasma synoviae).